Consider the following 493-residue polypeptide: Galactose-1-phosphate uridylyltransferase (493 aa).

The protein belongs to the galactose-1-phosphate uridylyltransferase type 2 family.

The protein resides in the cytoplasm. The catalysed reaction is alpha-D-galactose 1-phosphate + UDP-alpha-D-glucose = alpha-D-glucose 1-phosphate + UDP-alpha-D-galactose. Its pathway is carbohydrate metabolism; galactose metabolism. This chain is Galactose-1-phosphate uridylyltransferase, found in Lactococcus lactis subsp. cremoris (strain SK11).